The following is a 1755-amino-acid chain: Transposon Ty1-MR1 Gag-Pol polyprotein (1755 aa).

3 stretches are compositionally biased toward polar residues: residues 1-31 (MESQ…TTQD), 46-60 (VSTQ…TPLS), and 137-168 (VGTH…TNQH). Disordered regions lie at residues 1–88 (MESQ…YPQQ), 137–174 (VGTH…PPPI), and 350–420 (QQES…IRGS). The interval 299–401 (NNGIPINNKV…NSQSRTARAH (103 aa)) is RNA-binding. Residues 363-372 (SPSDEKKDSR) are compositionally biased toward basic and acidic residues. A compositionally biased stretch (polar residues) spans 373-411 (TYTNTTKPKSITRNSQKPNNSQSRTARAHNVSTFNNSPG). Catalysis depends on Asp-461, which acts as the For protease activity; shared with dimeric partner. The interval 583–640 (NVHTSESTRKYPYPFIHRMLAHANAQTIRYSLKNNTITYFNESDVDWSSAIDYQCPDC) is integrase-type zinc finger-like. In terms of domain architecture, Integrase catalytic spans 660–835 (NSYEPFQYLH…AGLDISTLLP (176 aa)). Mg(2+) is bound by residues Asp-671 and Asp-736. The interval 958-1172 (AVSPTDSTPP…LGGIGDSNAY (215 aa)) is disordered. The segment covering 960–969 (SPTDSTPPST) has biased composition (low complexity). Polar residues predominate over residues 1005–1015 (STPQISDIEST). Residues 1038–1053 (ESSHASKSKDFRHSDS) are compositionally biased toward basic and acidic residues. 2 stretches are compositionally biased toward polar residues: residues 1054-1082 (YSDN…QTSE) and 1095-1106 (SIDTSSSESNSL). The short motif at 1178-1212 (KKRSLEDNETEIKVSRDTWNTKNMRSLEPPRSKKR) is the Bipartite nuclear localization signal element. In terms of domain architecture, Reverse transcriptase Ty1/copia-type spans 1338–1476 (NNYYITQLDI…DILGLEIKYQ (139 aa)). Residues Asp-1346, Asp-1427, Asp-1428, Asp-1610, Glu-1652, and Asp-1685 each contribute to the Mg(2+) site. The region spanning 1610–1752 (DASYGNQPYY…IKTFKLLTNK (143 aa)) is the RNase H Ty1/copia-type domain.

The capsid protein forms a homotrimer, from which the VLPs are assembled. The protease is a homodimer, whose active site consists of two apposed aspartic acid residues. Initially, virus-like particles (VLPs) are composed of the structural unprocessed proteins Gag and Gag-Pol, and also contain the host initiator methionine tRNA (tRNA(i)-Met) which serves as a primer for minus-strand DNA synthesis, and a dimer of genomic Ty RNA. Processing of the polyproteins occurs within the particle and proceeds by an ordered pathway, called maturation. First, the protease (PR) is released by autocatalytic cleavage of the Gag-Pol polyprotein yielding capsid protein p45 and a Pol-p154 precursor protein. This cleavage is a prerequisite for subsequent processing of Pol-p154 at the remaining sites to release the mature structural and catalytic proteins. Maturation takes place prior to the RT reaction and is required to produce transposition-competent VLPs.

The protein localises to the cytoplasm. It is found in the nucleus. The enzyme catalyses DNA(n) + a 2'-deoxyribonucleoside 5'-triphosphate = DNA(n+1) + diphosphate. It catalyses the reaction Endonucleolytic cleavage to 5'-phosphomonoester.. Its function is as follows. Capsid protein (CA) is the structural component of the virus-like particle (VLP), forming the shell that encapsulates the retrotransposons dimeric RNA genome. The particles are assembled from trimer-clustered units and there are holes in the capsid shells that allow for the diffusion of macromolecules. CA also has nucleocapsid-like chaperone activity, promoting primer tRNA(i)-Met annealing to the multipartite primer-binding site (PBS), dimerization of Ty1 RNA and initiation of reverse transcription. The aspartyl protease (PR) mediates the proteolytic cleavages of the Gag and Gag-Pol polyproteins after assembly of the VLP. Functionally, reverse transcriptase/ribonuclease H (RT) is a multifunctional enzyme that catalyzes the conversion of the retro-elements RNA genome into dsDNA within the VLP. The enzyme displays a DNA polymerase activity that can copy either DNA or RNA templates, and a ribonuclease H (RNase H) activity that cleaves the RNA strand of RNA-DNA heteroduplexes during plus-strand synthesis and hydrolyzes RNA primers. The conversion leads to a linear dsDNA copy of the retrotransposon that includes long terminal repeats (LTRs) at both ends. In terms of biological role, integrase (IN) targets the VLP to the nucleus, where a subparticle preintegration complex (PIC) containing at least integrase and the newly synthesized dsDNA copy of the retrotransposon must transit the nuclear membrane. Once in the nucleus, integrase performs the integration of the dsDNA into the host genome. The sequence is that of Transposon Ty1-MR1 Gag-Pol polyprotein (TY1B-MR1) from Saccharomyces cerevisiae (strain ATCC 204508 / S288c) (Baker's yeast).